Reading from the N-terminus, the 124-residue chain is MEDERWKLSSSKGRSKSGRSCSSSSNYYYHSSDFNSSNATTLSRSYSASVTASRHATTAWSAAGAGGGGASSSSSSQHQHQQQQQQSNNSQRLSKKCVEAVKEHRARFYIVRRCVSMLVCWRDY.

The segment at 1–23 is disordered; that stretch reads MEDERWKLSSSKGRSKSGRSCSS. 2 N-linked (GlcNAc...) asparagine glycosylation sites follow: Asn35 and Asn38. Residues 59–75 form a helical membrane-spanning segment; the sequence is AWSAAGAGGGGASSSSS. Positions 60–95 are disordered; it reads WSAAGAGGGGASSSSSSQHQHQQQQQQSNNSQRLSK. Positions 71–91 are enriched in low complexity; it reads SSSSSSQHQHQQQQQQSNNSQ. The N-linked (GlcNAc...) asparagine glycan is linked to Asn88. Residues 92–124 form a required for DVL/RTFL small polypeptide activity region; it reads RLSKKCVEAVKEHRARFYIVRRCVSMLVCWRDY.

It belongs to the DVL/RTFL small polypeptides family.

It is found in the cell membrane. Its function is as follows. Small polypeptide acting as a regulatory molecule which coordinates cellular responses required for differentiation, growth and development, probably by restricting polar cell proliferation in lateral organs (e.g. leaves and petioles). The sequence is that of Small polypeptide ROTUNDIFOLIA LIKE 3 from Oryza sativa subsp. japonica (Rice).